The following is a 441-amino-acid chain: Serine/threonine-protein phosphatase 2A activator 1 (441 aa).

2 stretches are compositionally biased toward polar residues: residues 66–75 (NIPPSNTTHS) and 421–432 (QRQDDLNSTTYR). 2 disordered regions span residues 66–100 (NIPP…SSNQ) and 421–441 (QRQD…LGRN).

Belongs to the PTPA-type PPIase family.

The protein resides in the cytoplasm. It is found in the nucleus. It carries out the reaction [protein]-peptidylproline (omega=180) = [protein]-peptidylproline (omega=0). Functionally, PPIases accelerate the folding of proteins. It catalyzes the cis-trans isomerization of proline imidic peptide bonds in oligopeptides. Acts as a regulatory subunit for PP2A-like phosphatases modulating their activity or substrate specificity, probably by inducing a conformational change in the catalytic subunit, a direct target of the PPIase. Can reactivate inactive phosphatase PP2A-phosphatase methylesterase complexes (PP2Ai) in presence of ATP and Mg(2+) by dissociating the inactive form from the complex. In Debaryomyces hansenii (strain ATCC 36239 / CBS 767 / BCRC 21394 / JCM 1990 / NBRC 0083 / IGC 2968) (Yeast), this protein is Serine/threonine-protein phosphatase 2A activator 1 (RRD1).